We begin with the raw amino-acid sequence, 418 residues long: Sprouty-related, EVH1 domain-containing protein 2 (418 aa).

One can recognise a WH1 domain in the interval Thr5–Leu122. The disordered stretch occupies residues Thr127–Ser171. Over residues Thr146–Ser156 the composition is skewed to polar residues. The region spanning Pro201 to Gly257 is the KBD domain. Phosphoserine is present on Ser206. Phosphotyrosine occurs at positions 228 and 231. The disordered stretch occupies residues Gly275–Glu302. Residues Arg308 to Ala416 form the SPR domain.

In terms of assembly, homodimer and heterodimer. Able to interact with SPRED1 to form heterodimers. Interacts with RAS. May interact with ZDHHC13 (via ANK repeats) and ZDHHC17 (via ANK repeats). Interacts with TESK1. Interacts with NF1. In terms of processing, phosphorylated on serine and threonine residues. Phosphorylated on tyrosine. Phosphorylation of Tyr-228 and Tyr-231 are required for ubiquitination. Ubiquitinated; leading to degradation by the proteasome. In terms of tissue distribution, expressed in liver, skin, small intestine, salivary gland and prostate.

Its subcellular location is the cell membrane. The protein resides in the cytoplasmic vesicle. It localises to the secretory vesicle membrane. The protein localises to the cytoplasm. Negatively regulates Ras signaling pathways and downstream activation of MAP kinases. Recruits and translocates NF1 to the cell membrane, thereby enabling NF1-dependent hydrolysis of active GTP-bound Ras to inactive GDP-bound Ras. Inhibits fibroblast growth factor (FGF)-induced retinal lens fiber differentiation, probably by inhibiting FGF-mediated phosphorylation of ERK1/2. Inhibits TGFB-induced epithelial-to-mesenchymal transition in lens epithelial cells. In Homo sapiens (Human), this protein is Sprouty-related, EVH1 domain-containing protein 2 (SPRED2).